We begin with the raw amino-acid sequence, 580 residues long: Zinc finger CCCH domain-containing protein 47 (580 aa).

2 ANK repeats span residues 72-102 and 107-139; these read EERTPLMVAAMYGSIKVLTFIVSTGKSDVNR and ERVTPLHCAVAGCSVNMIEVINVLLDASALVNS. 2 C3H1-type zinc fingers span residues 251–278 and 286–310; these read PYTCVPCPEFRKGSCPKGDSCEYAHGVF and QYKTRLCKDETGCARKVCFFAHKRE. Residues 421 to 451 are disordered; that stretch reads YVSSPSRNSQMGQNMNQHYPSSPVRQPPSQH.

In terms of tissue distribution, expressed in roots and anthers.

It is found in the nucleus. Functionally, involved in salt stress response. May positively modulate plant tolerance to salt stress. This Arabidopsis thaliana (Mouse-ear cress) protein is Zinc finger CCCH domain-containing protein 47.